The chain runs to 200 residues: Small ribosomal subunit protein uS4 (200 aa).

In terms of domain architecture, S4 RNA-binding spans 94–157 (SRLDNLVFRA…QTSPQVKDAV (64 aa)).

Belongs to the universal ribosomal protein uS4 family. In terms of assembly, part of the 30S ribosomal subunit. Contacts protein S5. The interaction surface between S4 and S5 is involved in control of translational fidelity.

One of the primary rRNA binding proteins, it binds directly to 16S rRNA where it nucleates assembly of the body of the 30S subunit. Its function is as follows. With S5 and S12 plays an important role in translational accuracy. The chain is Small ribosomal subunit protein uS4 from Metamycoplasma arthritidis (strain 158L3-1) (Mycoplasma arthritidis).